A 1209-amino-acid chain; its full sequence is MARRSQSSSQGDNPLAPGYLPPHYKEYYRLAVDALTEGGPEAYNRFLASEGAPDFLCPEELEHVSRHLQPPQYVAREPPEGTPSDVDMDGSSGTYWPVNSDQAVPELDLGWPLTFGFQGTEVTTLVQPPPPDSPSIKDEARRMIRSAQQVVAVVMDMFTDVDLLSEVLEAAARRVPVYILLDEMNAQHFLDMADKCRVNLHHVDFLRVRTVAGPTYYCRTGKSFKGHLKEKFLLVDCAVVMSGSYSFMWSFEKIHRSLAHVFQGELVSSFDEEFRILFAQSEPLVPSAGALARMDAYALAPYSGAGPLVGVPGVGAPTPFSFPKRAHLLFPPPREEGLGFPSFLDPDRHFLSAFRREELQRMPGGALEPHTGLRPLARPTEAGPFGELAGPRGFFQSRHLEMDAFKRHSYATPDGAGAVENFAAARQVSRQTFLSHGDDFRFQTSHFQRDQLYQQHYQWDPQFAPARPQGLFEKLRAGRPGFADPDDFALGAGHRFPELGADVHQRLEYVPSSASREVRHGSDPAFGPSPRGLEPSGASRPNLGQRFPCQATLRQGLDTASEAEPERRGGPEGRAGLRHWRLASYLSGCHGDGGEEGLPMEAEACEDEVLAPGGRDLLPSAFRTPAAFPAKGPKPGSGSGGGDSSEREGPEETSLAKQDSFRSRLNPLIQRSSRLRSSLIFASQAEGAVGTAAATTEKVQLMHKEQTVSETLGPSGEAVRSSASAKVAELLEKYKGPARDPGGAGGAVTSSSHSKAVVSQAWREEVVAPGGAGTERRSLESCLLDLRDSFAQQLHQEAERHPGAASLTAAQLLDTLGGTDRLPSRFLSAQGRSLSPQGRDSPPPEGLGTHQLPYSEPKGNPTPAYPERKGSPTPAYPERKGSPTPAYPERKGSPTPAYPERKGSPTQAYPERKGSPTSGFPNRRGSPTTGLMEQKGSPTSTYPDRRGSPVPPVPERRGSPVPPVPERRGSLTFAGESSKTGPTEEVSSGPMEVLRKGSLRLRQLLSPKNERRGEDEGSFPTPQENGQPESPRRPSLSRGDSTEAAAEERGSRVRLASATANALYSSNLRDDTKAILEQISAHGQKHRGVPAPGPAHSSPDVGRPTTAGDLAPDMSDKDKCSAIFRSDSLGTQGRLSRTLPGSAEERDRLLRRMESMRKEKRVYSRFEVFCKKDEAGSSGAGDNLADEDTRDSKMGKFVPKILGTFKSKK.

The segment at 1–286 (MARRSQSSSQ…LFAQSEPLVP (286 aa)) is DUF1669. The interval 1–286 (MARRSQSSSQ…LFAQSEPLVP (286 aa)) is mediates interaction with CSNK1A1 and is required for FAM83H activity in keratin cytoskeleton organization. Phosphoserine occurs at positions 512, 513, 515, 522, 639, and 660. 3 disordered regions span residues 512–545 (SSASREVRHGSDPAFGPSPRGLEPSGASRPNLGQ), 615–664 (RDLL…FRSR), and 735–760 (KGPARDPGGAGGAVTSSSHSKAVVSQ). Thr-749 carries the phosphothreonine modification. Phosphoserine is present on residues Ser-752, Ser-778, Ser-806, and Ser-871. The tract at residues 829–1056 (AQGRSLSPQG…EERGSRVRLA (228 aa)) is disordered. At Thr-873 the chain carries Phosphothreonine. Phosphoserine is present on residues Ser-882, Ser-893, Ser-904, and Ser-915. Polar residues predominate over residues 915–942 (SPTSGFPNRRGSPTTGLMEQKGSPTSTY). Residue Thr-917 is modified to Phosphothreonine. Residue Ser-926 is modified to Phosphoserine. Thr-928 is modified (phosphothreonine). A phosphoserine mark is found at Ser-937, Ser-948, Ser-959, Ser-970, Ser-977, Ser-1035, Ser-1041, and Ser-1057. The residue at position 1072 (Thr-1072) is a Phosphothreonine. 2 disordered regions span residues 1076–1147 (LEQI…EERD) and 1174–1193 (EAGSSGAGDNLADEDTRDSK). 3 positions are modified to phosphoserine: Ser-1080, Ser-1098, and Ser-1177.

This sequence belongs to the FAM83 family. Directly interacts (via DUF1669) with casein kinase isoforms CSNK1A1, CSNK1A1L, CSNK1D and CSNK1E. Interaction with CSNK1A1 recruits CSNK1A1 to keratin filaments. Interacts with KRT18 and probably other keratins. Expressed in tooth follicle, eye, liver and kidney.

It localises to the cytoplasm. The protein resides in the cytoskeleton. Functionally, may play a major role in the structural organization and calcification of developing enamel. May play a role in keratin cytoskeleton disassembly by recruiting CSNK1A1 to keratin filaments. Thereby, it may regulate epithelial cell migration. In Mus musculus (Mouse), this protein is Protein FAM83H.